Consider the following 379-residue polypeptide: Protein RecA (379 aa).

Gly79–Thr86 provides a ligand contact to ATP.

The protein belongs to the RecA family.

Its subcellular location is the cytoplasm. Functionally, can catalyze the hydrolysis of ATP in the presence of single-stranded DNA, the ATP-dependent uptake of single-stranded DNA by duplex DNA, and the ATP-dependent hybridization of homologous single-stranded DNAs. It interacts with LexA causing its activation and leading to its autocatalytic cleavage. The protein is Protein RecA of Streptococcus thermophilus.